Reading from the N-terminus, the 348-residue chain is GMP reductase 2 (348 aa).

NADP(+) is bound by residues 26–27 (SR), lysine 78, 129–131 (DVA), and 180–181 (IG). Residues glycine 181, glycine 183, and cysteine 186 each contribute to the K(+) site. The active-site Thioimidate intermediate is the cysteine 186. The Proton donor/acceptor role is filled by threonine 188. Arginine 189 is a binding site for K(+). GMP is bound by residues 219-221 (DGG), 242-243 (GG), 268-270 (GMS), and 286-290 (RASEG). NADP(+) is bound by residues methionine 269 and 285–286 (YR). Lysine 291 carries the post-translational modification N6-acetyllysine. 314 to 317 (STCT) provides a ligand contact to NADP(+).

The protein belongs to the IMPDH/GMPR family. GuaC type 1 subfamily. In terms of assembly, homotetramer.

It catalyses the reaction IMP + NH4(+) + NADP(+) = GMP + NADPH + 2 H(+). Catalyzes the irreversible NADPH-dependent deamination of GMP to IMP. It functions in the conversion of nucleobase, nucleoside and nucleotide derivatives of G to A nucleotides, and in maintaining the intracellular balance of A and G nucleotides. Plays a role in modulating cellular differentiation. In Mus musculus (Mouse), this protein is GMP reductase 2.